A 55-amino-acid polypeptide reads, in one-letter code: uncharacterized protein (55 aa).

A helical transmembrane segment spans residues 7–24 (VALVGAVLATLTACTGHI).

The protein localises to the membrane. This is an uncharacterized protein from Escherichia coli O157:H7.